Consider the following 135-residue polypeptide: ATP synthase epsilon chain (135 aa).

Belongs to the ATPase epsilon chain family. F-type ATPases have 2 components, CF(1) - the catalytic core - and CF(0) - the membrane proton channel. CF(1) has five subunits: alpha(3), beta(3), gamma(1), delta(1), epsilon(1). CF(0) has three main subunits: a, b and c.

The protein resides in the cell inner membrane. Its function is as follows. Produces ATP from ADP in the presence of a proton gradient across the membrane. The polypeptide is ATP synthase epsilon chain (Rhodopseudomonas palustris (strain HaA2)).